We begin with the raw amino-acid sequence, 967 residues long: Isoleucine--tRNA ligase (967 aa).

The 'HIGH' region signature appears at 68-78 (PYANGTLHMGH). Position 583 (Glu-583) interacts with L-isoleucyl-5'-AMP. Positions 624 to 628 (KMSKS) match the 'KMSKS' region motif. Lys-627 serves as a coordination point for ATP. The Zn(2+) site is built by Cys-937, Cys-940, Cys-957, and Cys-960.

The protein belongs to the class-I aminoacyl-tRNA synthetase family. IleS type 1 subfamily. As to quaternary structure, monomer. Requires Zn(2+) as cofactor.

The protein localises to the cytoplasm. It catalyses the reaction tRNA(Ile) + L-isoleucine + ATP = L-isoleucyl-tRNA(Ile) + AMP + diphosphate. Catalyzes the attachment of isoleucine to tRNA(Ile). As IleRS can inadvertently accommodate and process structurally similar amino acids such as valine, to avoid such errors it has two additional distinct tRNA(Ile)-dependent editing activities. One activity is designated as 'pretransfer' editing and involves the hydrolysis of activated Val-AMP. The other activity is designated 'posttransfer' editing and involves deacylation of mischarged Val-tRNA(Ile). The sequence is that of Isoleucine--tRNA ligase from Prochlorococcus marinus (strain NATL2A).